A 261-amino-acid chain; its full sequence is tRNA pseudouridine synthase A (261 aa).

The active-site Nucleophile is the Asp51. Tyr109 is a substrate binding site.

The protein belongs to the tRNA pseudouridine synthase TruA family. In terms of assembly, homodimer.

The enzyme catalyses uridine(38/39/40) in tRNA = pseudouridine(38/39/40) in tRNA. Formation of pseudouridine at positions 38, 39 and 40 in the anticodon stem and loop of transfer RNAs. The sequence is that of tRNA pseudouridine synthase A from Methylobacillus flagellatus (strain ATCC 51484 / DSM 6875 / VKM B-1610 / KT).